The primary structure comprises 1234 residues: uncharacterized protein (1234 aa).

This is an uncharacterized protein from Schizosaccharomyces pombe (strain 972 / ATCC 24843) (Fission yeast).